Consider the following 176-residue polypeptide: Peptide deformylase 2 (176 aa).

The Fe cation site is built by Cys-99 and His-141. The active site involves Glu-142. His-145 lines the Fe cation pocket.

This sequence belongs to the polypeptide deformylase family. Fe(2+) is required as a cofactor.

It catalyses the reaction N-terminal N-formyl-L-methionyl-[peptide] + H2O = N-terminal L-methionyl-[peptide] + formate. Its function is as follows. Removes the formyl group from the N-terminal Met of newly synthesized proteins. Requires at least a dipeptide for an efficient rate of reaction. N-terminal L-methionine is a prerequisite for activity but the enzyme has broad specificity at other positions. The protein is Peptide deformylase 2 of Bordetella bronchiseptica (strain ATCC BAA-588 / NCTC 13252 / RB50) (Alcaligenes bronchisepticus).